Reading from the N-terminus, the 129-residue chain is Small ribosomal subunit protein uS12 (129 aa).

A disordered region spans residues 1 to 25 (MPTYNQLVRFGRKSKTRKTKSPALE). The span at 10 to 20 (FGRKSKTRKTK) shows a compositional bias: basic residues. The residue at position 89 (Asp89) is a 3-methylthioaspartic acid. The disordered stretch occupies residues 109–129 (GRKQGRSRYGTPRKQVAVTKK).

This sequence belongs to the universal ribosomal protein uS12 family. Part of the 30S ribosomal subunit. Contacts proteins S8 and S17. May interact with IF1 in the 30S initiation complex.

Functionally, with S4 and S5 plays an important role in translational accuracy. In terms of biological role, interacts with and stabilizes bases of the 16S rRNA that are involved in tRNA selection in the A site and with the mRNA backbone. Located at the interface of the 30S and 50S subunits, it traverses the body of the 30S subunit contacting proteins on the other side and probably holding the rRNA structure together. The combined cluster of proteins S8, S12 and S17 appears to hold together the shoulder and platform of the 30S subunit. The sequence is that of Small ribosomal subunit protein uS12 from Rickettsia peacockii (strain Rustic).